Reading from the N-terminus, the 269-residue chain is Ribosomal RNA small subunit methyltransferase A (269 aa).

6 residues coordinate S-adenosyl-L-methionine: H12, L14, G39, E60, D81, and N103.

The protein belongs to the class I-like SAM-binding methyltransferase superfamily. rRNA adenine N(6)-methyltransferase family. RsmA subfamily.

It is found in the cytoplasm. The catalysed reaction is adenosine(1518)/adenosine(1519) in 16S rRNA + 4 S-adenosyl-L-methionine = N(6)-dimethyladenosine(1518)/N(6)-dimethyladenosine(1519) in 16S rRNA + 4 S-adenosyl-L-homocysteine + 4 H(+). Its function is as follows. Specifically dimethylates two adjacent adenosines (A1518 and A1519) in the loop of a conserved hairpin near the 3'-end of 16S rRNA in the 30S particle. May play a critical role in biogenesis of 30S subunits. This is Ribosomal RNA small subunit methyltransferase A from Leptothrix cholodnii (strain ATCC 51168 / LMG 8142 / SP-6) (Leptothrix discophora (strain SP-6)).